The following is a 448-amino-acid chain: Microtubule-associated protein tau (448 aa).

Basic and acidic residues predominate over residues 1-16 (MAEPRQEFDVMEDHAQ). A disordered region spans residues 1 to 264 (MAEPRQEFDV…GPMPDLKNVK (264 aa)). Ala-2 carries the post-translational modification N-acetylalanine. A Phosphotyrosine modification is found at Tyr-19. Lys-33 is covalently cross-linked (Glycyl lysine isopeptide (Lys-Gly) (interchain with G-Cter in ubiquitin)). Residues Ser-35 and Ser-50 each carry the phosphoserine modification. Polar residues predominate over residues 50-60 (SETSDAKSTPT). Thr-58 and Thr-60 each carry phosphothreonine. Residues 71-89 (EGAPGEQAAAQAPAEIPEG) show a composition bias toward low complexity. Phosphothreonine is present on Thr-100. A compositionally biased stretch (basic and acidic residues) spans 119–135 (KGKDGTGPDDKKTKGAD). Thr-144 carries the post-translational modification Phosphothreonine. An Omega-N-methylarginine modification is found at Arg-146. Lys-154 is modified (N6,N6-dimethyllysine; alternate). An N6-acetyllysine; alternate modification is found at Lys-154. A phosphothreonine mark is found at Thr-160, Thr-166, Thr-167, and Thr-172. Positions 163–176 (PAKTTPTPKTSPAT) are enriched in low complexity. The span at 189–200 (KSERGESGKSGD) shows a compositional bias: basic and acidic residues. Phosphoserine occurs at positions 198 and 202. Low complexity predominate over residues 201-221 (RSGYSSPGSPGTPGSRSRTPS). Position 204 is a phosphotyrosine (Tyr-204). Phosphoserine is present on residues Ser-205, Ser-206, and Ser-209. 2 positions are modified to phosphothreonine: Thr-212 and Thr-219. Phosphoserine is present on Ser-221. The residue at position 224 (Thr-224) is a Phosphothreonine. Position 232 is an N6-acetyllysine (Lys-232). Thr-238 is subject to Phosphothreonine. A phosphoserine mark is found at Ser-242 and Ser-244. Tau/MAP repeat units follow at residues 251-281 (QAAPGPMPDLKNVKSKIGSTENLKHQPGGGK), 282-312 (VQIINKKLDLSNVQSKCGSKDNIKHVPGGGS), 313-343 (VQIVYKPVDLSKVTSKCGSLGNIHHKPGGGQ), and 344-375 (VEVKSEKLDFKDRVQSKIGSLDNITHVPGGGN). A Glycyl lysine isopeptide (Lys-Gly) (interchain with G-Cter in ubiquitin) cross-link involves residue Lys-261. At Lys-266 the chain carries N6-acetyllysine; alternate. Lys-266 is subject to N6-methyllysine; alternate. Lys-266 is covalently cross-linked (Glycyl lysine isopeptide (Lys-Gly) (interchain with G-Cter in ubiquitin); alternate). A Phosphoserine modification is found at Ser-269. A Glycyl lysine isopeptide (Lys-Gly) (interchain with G-Cter in ubiquitin) cross-link involves residue Lys-274. The residue at position 288 (Lys-288) is an N6-acetyllysine; alternate. A Glycyl lysine isopeptide (Lys-Gly) (interchain with G-Cter in ubiquitin); alternate cross-link involves residue Lys-288. 2 positions are modified to phosphoserine: Ser-292 and Ser-296. Position 297 is an N6-acetyllysine (Lys-297). The cysteines at positions 298 and 329 are disulfide-linked. The residue at position 300 (Ser-300) is a Phosphoserine. The residue at position 305 (Lys-305) is an N6-acetyllysine; alternate. Lys-305 participates in a covalent cross-link: Glycyl lysine isopeptide (Lys-Gly) (interchain with G-Cter in ubiquitin); alternate. Phosphoserine is present on Ser-312. An N6,N6-dimethyllysine; alternate modification is found at Lys-318. Lys-318, Lys-324, and Lys-328 each carry N6-acetyllysine; alternate. Glycyl lysine isopeptide (Lys-Gly) (interchain with G-Cter in ubiquitin); alternate cross-links involve residues Lys-318, Lys-324, and Lys-328. Ser-331 carries the post-translational modification Phosphoserine. An N6-acetyllysine; alternate mark is found at Lys-338, Lys-350, and Lys-354. Glycyl lysine isopeptide (Lys-Gly) (interchain with G-Cter in ubiquitin); alternate cross-links involve residues Lys-338, Lys-350, and Lys-354. Arg-356 bears the Omega-N-methylarginine mark. Position 359 is a phosphoserine (Ser-359). Residue Lys-360 forms a Glycyl lysine isopeptide (Lys-Gly) (interchain with G-Cter in ubiquitin) linkage. Ser-363 is subject to Phosphoserine. Lys-376 is modified (N6-acetyllysine; alternate). Lys-376 participates in a covalent cross-link: Glycyl lysine isopeptide (Lys-Gly) (interchain with G-Cter in ubiquitin); alternate. Residue Lys-382 forms a Glycyl lysine isopeptide (Lys-Gly) (interchain with G-Cter in ubiquitin) linkage. Lys-392 bears the N6-acetyllysine; alternate mark. Lys-392 is covalently cross-linked (Glycyl lysine isopeptide (Lys-Gly) (interchain with G-Cter in ubiquitin); alternate). Tyr-401 is subject to Phosphotyrosine. A phosphoserine mark is found at Ser-403 and Ser-407. Positions 405-424 (VVSGDTSPRHLSNVSSTGSI) are disordered. Polar residues predominate over residues 408–423 (GDTSPRHLSNVSSTGS). Thr-410 bears the Phosphothreonine mark. A phosphoserine mark is found at Ser-411, Ser-416, Ser-423, and Ser-429. Thr-434 carries the post-translational modification Phosphothreonine.

As to quaternary structure, interacts with MARK1, MARK2, MARK3 and MARK4. Interacts with SQSTM1 when polyubiquitinated. Interacts with PSMC2 through SQSTM1. Interacts with FKBP4. Binds to CSNK1D. Interacts with SGK1. Interacts with PIN1. Interacts with LRRK2. Interacts with LRP1, leading to endocytosis; this interaction is reduced in the presence of LRPAP1/RAP. In terms of processing, polyubiquitinated. Requires functional TRAF6 and may provoke SQSTM1-dependent degradation by the proteasome. Post-translationally, phosphorylation at various serine and threonine residues in S-P or T-P motifs by proline-directed protein kinases (PDPK1, CDK1, CDK5, GSK3, MAPK) (a few sites per protein in interphase, more in mitosis), and at serine residues in K-X-G-S motifs by MAP/microtubule affinity-regulating kinase (MARK1, MARK2, MARK3, MARK4), causing detachment from microtubules, and their disassembly. Phosphorylation at Ser-269 by BRSK1 and BRSK2 in neurons affects ability to bind microtubules and plays a role in neuron polarization. Phosphorylated by PHK. Dephosphorylation at several serine and threonine residues by the serine/threonine phosphatase PPP5C. O-glycosylated; contains at least 4 GlcNAc. Site-specific or stoichiometric changes in glycosylation may modulate tau function and also play a role in PHF's formation. As to expression, expressed in neurons.

The protein resides in the cytoplasm. It localises to the cytosol. Its subcellular location is the cell membrane. The protein localises to the cytoskeleton. It is found in the cell projection. The protein resides in the axon. It localises to the dendrite. Its subcellular location is the secreted. Promotes microtubule assembly and stability, and might be involved in the establishment and maintenance of neuronal polarity. The C-terminus binds axonal microtubules while the N-terminus binds neural plasma membrane components, suggesting that tau functions as a linker protein between both. Axonal polarity is predetermined by tau localization (in the neuronal cell) in the domain of the cell body defined by the centrosome. The short isoforms allow plasticity of the cytoskeleton whereas the longer isoforms may preferentially play a role in its stabilization. The chain is Microtubule-associated protein tau (MAPT) from Bos taurus (Bovine).